A 588-amino-acid polypeptide reads, in one-letter code: MNNSINHKFHHISRAEYQELLAVSRGDAVADYIIDNVSILDLINGGEISGPIVIKGRYIAGVGAEYADAPALQRIDARGATAVPGFIDAHLHIESSMMTPVTFETATLPRGLTTVICDPHEIVNVMGEAGFAWFARCAEQARQNQYLQVSSCVPALEGCDVNGASFTLEQMLAWRDHPQVTGLAEMMDYPGVISGQNALLDKLDAFRHLTLDGHCPGLGGKELNAYITAGIENCHESYQLEEGRRKLQLGMSLMIREGSAARNLNALAPLINEFNSPQCMLCTDDRNPWEIAHEGHIDALIRRLIEQHNVPLHVAYRVASWSTARHFGLNHLGLLAPGKQADIVLLSDARKVTVQQVLVKGEPIDAQTLQAEESARLAQSAPPYGNTIARQPVSASDFALQFTPGKRYRVIDVIHNELITHSHSSVYSENGFDRDDVCFIAVLERYGQRLAPACGLLGGFGLNEGALAATVSHDSHNIVVIGRSAEEMALAVNQVIQDGGGLCVVRNGQVQSHLPLPIAGLMSTDTAQSLAEQIDALKAAARECGPLPDEPFIQMAFLSLPVIPALKLTSQGLFDVEKFAFTTLEVTE.

The protein belongs to the metallo-dependent hydrolases superfamily. Adenine deaminase family. In terms of assembly, homodimer. Requires Mn(2+) as cofactor.

The enzyme catalyses adenine + H2O + H(+) = hypoxanthine + NH4(+). This Shigella sonnei (strain Ss046) protein is Adenine deaminase.